Reading from the N-terminus, the 420-residue chain is Glucose-1-phosphate adenylyltransferase (420 aa).

Alpha-D-glucose 1-phosphate is bound by residues Tyr-107, Gly-172, Glu-187–Lys-188, and Ser-205.

This sequence belongs to the bacterial/plant glucose-1-phosphate adenylyltransferase family. Homotetramer.

The catalysed reaction is alpha-D-glucose 1-phosphate + ATP + H(+) = ADP-alpha-D-glucose + diphosphate. It participates in glycan biosynthesis; glycogen biosynthesis. Involved in the biosynthesis of ADP-glucose, a building block required for the elongation reactions to produce glycogen. Catalyzes the reaction between ATP and alpha-D-glucose 1-phosphate (G1P) to produce pyrophosphate and ADP-Glc. In Sinorhizobium fredii (strain NBRC 101917 / NGR234), this protein is Glucose-1-phosphate adenylyltransferase.